A 243-amino-acid polypeptide reads, in one-letter code: Uridylate kinase (243 aa).

Residue 15–18 participates in ATP binding; sequence KISG. Residue Gly-57 coordinates UMP. Residues Gly-58 and Arg-62 each contribute to the ATP site. Residues Asp-77 and 138-145 each bind UMP; that span reads TGNPFFTT. Residues Thr-165, Phe-171, and Asp-174 each contribute to the ATP site.

Belongs to the UMP kinase family. Homohexamer.

The protein resides in the cytoplasm. The catalysed reaction is UMP + ATP = UDP + ADP. It participates in pyrimidine metabolism; CTP biosynthesis via de novo pathway; UDP from UMP (UMPK route): step 1/1. With respect to regulation, inhibited by UTP. Its function is as follows. Catalyzes the reversible phosphorylation of UMP to UDP. The protein is Uridylate kinase of Blochmanniella floridana.